The chain runs to 309 residues: Probable non-structural 36.3 kDa protein (309 aa).

The sequence is that of Probable non-structural 36.3 kDa protein (S6) from Avena sativa (Oat).